Reading from the N-terminus, the 621-residue chain is tRNA uridine 5-carboxymethylaminomethyl modification enzyme MnmG (621 aa).

FAD is bound at residue 8–13; sequence GAGHAG. 269 to 283 serves as a coordination point for NAD(+); sequence GPRYCPSVEDKIFRF.

It belongs to the MnmG family. Homodimer. Heterotetramer of two MnmE and two MnmG subunits. The cofactor is FAD.

The protein localises to the cytoplasm. NAD-binding protein involved in the addition of a carboxymethylaminomethyl (cmnm) group at the wobble position (U34) of certain tRNAs, forming tRNA-cmnm(5)s(2)U34. The sequence is that of tRNA uridine 5-carboxymethylaminomethyl modification enzyme MnmG from Chlorobium phaeobacteroides (strain DSM 266 / SMG 266 / 2430).